Consider the following 783-residue polypeptide: Cation/H(+) antiporter 10 (783 aa).

12 helical membrane passes run 31-51 (VVFG…FFCI), 61-81 (IGIS…PQLF), 100-120 (IAAL…LMTV), 135-155 (VVIG…QNFF), 175-195 (AIVI…LLEL), 206-226 (ALSA…VASI), 244-264 (AVII…QWVI), 276-295 (MYIH…FVFF), 300-322 (ILGP…ALEA), 356-376 (IFFN…ACLA), 389-409 (LAVS…YEAV), and 418-438 (ATYS…PTVL).

This sequence belongs to the monovalent cation:proton antiporter 2 (CPA2) transporter (TC 2.A.37) family. CHX (TC 2.A.37.4) subfamily. As to expression, specifically expressed in pollen.

It is found in the membrane. Functionally, may operate as a cation/H(+) antiporter. This chain is Cation/H(+) antiporter 10 (CHX10), found in Arabidopsis thaliana (Mouse-ear cress).